A 592-amino-acid polypeptide reads, in one-letter code: ATP-dependent RNA helicase DBP3 (592 aa).

The interval 1 to 146 (MGKRPIEDDA…AGSYTEHTEL (146 aa)) is disordered. Residues 19–31 (KKSKKEKSGKSKK) are compositionally biased toward basic residues. Positions 73 to 82 (EAKEASKAGK) are enriched in basic and acidic residues. A compositionally biased stretch (basic residues) spans 97 to 108 (AARKAARKAEKK). Residues 116–141 (TASSAPTEASSVPAQTLSSSNAGSYT) show a composition bias toward polar residues. The Q motif signature appears at 179–206 (VNFKYLPVTDESQRAPFAGFTAPTPIQA). The Helicase ATP-binding domain occupies 209 to 382 (WPFLLSGRDM…STFMVSPVRI (174 aa)). 222 to 229 (AETGSGKT) contributes to the ATP binding site. The short motif at 330–333 (DEAD) is the DEAD box element. In terms of domain architecture, Helicase C-terminal spans 413–562 (RLLQLLKQYQ…EVPEELLKFG (150 aa)).

This sequence belongs to the DEAD box helicase family. DDX5/DBP2 subfamily.

It localises to the nucleus. The protein localises to the nucleolus. It carries out the reaction ATP + H2O = ADP + phosphate + H(+). Its function is as follows. ATP-dependent RNA helicase required for 60S ribosomal subunit synthesis. Involved in efficient pre-rRNA processing, predominantly at site A3, which is necessary for the normal formation of 25S and 5.8S rRNAs. The polypeptide is ATP-dependent RNA helicase DBP3 (DBP3) (Phaeosphaeria nodorum (strain SN15 / ATCC MYA-4574 / FGSC 10173) (Glume blotch fungus)).